We begin with the raw amino-acid sequence, 695 residues long: L-type lectin-domain containing receptor kinase S.7 (695 aa).

Positions 1–23 (MPPRCRRLPLLFILLLAVRPLSA) are cleaved as a signal peptide. Residues 24–331 (AAASSIAAAP…NHRRRHLFYK (308 aa)) lie on the Extracellular side of the membrane. Positions 37 to 276 (YRRISWASNL…VERWTFRTFG (240 aa)) are legume-lectin like. N-linked (GlcNAc...) asparagine glycosylation is found at N45 and N279. Over residues 286 to 320 (PTKYIGPMPPNNQPLPPPPSPSPSPPPPSPPPPPH) the composition is skewed to pro residues. A disordered region spans residues 286–323 (PTKYIGPMPPNNQPLPPPPSPSPSPPPPSPPPPPHPNH). Residues 332–352 (VLGGVLGGMVLLGLVVVGSAV) traverse the membrane as a helical segment. Residues 353–695 (LLGRSVRRKN…TANTAFFSCR (343 aa)) lie on the Cytoplasmic side of the membrane. Position 376 is a phosphothreonine (T376). The residue at position 378 (S378) is a Phosphoserine. T386 and T403 each carry phosphothreonine. The Protein kinase domain occupies 389 to 661 (FDSGNVIGVG…SMLDGTAPLI (273 aa)). ATP-binding positions include 395–403 (IGVGGSGAT) and K418. D514 (proton acceptor) is an active-site residue. Residue T657 is modified to Phosphothreonine.

The protein in the N-terminal section; belongs to the leguminous lectin family. In the C-terminal section; belongs to the protein kinase superfamily. Ser/Thr protein kinase family. Interacts with INP1. Interaction with INP1 is required for DAF1 polar localization at the future aperture sites in tetrads. Post-translationally, autophosphorylated at Thr-376; Ser-378; Thr-386; Thr-403 and Thr-657. Expressed in roots, leaves, lemma, palea, pistil and anthers.

It localises to the cell membrane. The protein localises to the cytoplasm. It is found in the cytosol. The catalysed reaction is L-seryl-[protein] + ATP = O-phospho-L-seryl-[protein] + ADP + H(+). It catalyses the reaction L-threonyl-[protein] + ATP = O-phospho-L-threonyl-[protein] + ADP + H(+). Its function is as follows. Legume-lectin receptor-like kinase required for normal pollen development and male fertility. Regulates pollen exine assembly and aperture development. Plays a critical role in annulus formation, and may participate in the formation of the fibrillar-granular layer underneath the operculum. May function by regulating the expression of genes involved in pollen exine development. Kinase activity is required for its function in pollen development. This Oryza sativa subsp. japonica (Rice) protein is L-type lectin-domain containing receptor kinase S.7.